The following is a 372-amino-acid chain: uncharacterized protein (372 aa).

The signal sequence occupies residues 1–19 (MKIFFLFIILLGIIQLSNS). Asn18 is a glycosylation site (N-linked (GlcNAc...) asparagine). Residues 20 to 160 (SSCNIDIAGD…IWTTKYSCAI (141 aa)) form the MRH domain. A disulfide bridge connects residues Cys22 and Cys58. The N-linked (GlcNAc...) asparagine glycan is linked to Asn59. A disulfide bond links Cys128 and Cys158. Positions 185 to 282 (NEILNEAQSN…VQFNDDIKLI (98 aa)) form a coiled coil. Positions 201–233 (KNEDLNNNNNNNNNNNNNNNNNNNNNNNNNKIN) are disordered. Low complexity predominate over residues 206 to 230 (NNNNNNNNNNNNNNNNNNNNNNNNN).

The protein localises to the secreted. This is an uncharacterized protein from Dictyostelium discoideum (Social amoeba).